Here is a 969-residue protein sequence, read N- to C-terminus: Putative zinc protease mug138 (969 aa).

His-68 serves as a coordination point for Zn(2+). Glu-71 serves as the catalytic Proton acceptor. His-72 and Glu-149 together coordinate Zn(2+).

This sequence belongs to the peptidase M16 family.

The protein resides in the cytoplasm. In terms of biological role, has a role in meiosis. This Schizosaccharomyces pombe (strain 972 / ATCC 24843) (Fission yeast) protein is Putative zinc protease mug138 (mug138).